The following is a 1163-amino-acid chain: Genome polyprotein (1163 aa).

The Cytoplasmic segment spans residues 1 to 104 (MSGRKAQGKT…LSSRKRRSYE (104 aa)). The interval 38–72 (PGPSRGVQGFIFFFLFNVLTGRKITAHLKKLWRML) is hydrophobic; homodimerization of capsid protein C. Residues 102–121 (SYEVLTVQFLILGMLLMTGG) constitute a propeptide, ER anchor for the capsid protein C, removed in mature form by serine protease NS3. Residues 105 to 125 (VLTVQFLILGMLLMTGGVTLV) form a helical membrane-spanning segment. Topologically, residues 126–244 (RKSRWLLLNV…GERQLQKIER (119 aa)) are extracellular. N134 and N150 each carry an N-linked (GlcNAc...) asparagine; by host glycan. A helical transmembrane segment spans residues 245–265 (WLVRNPFFAVTALAIAYLVGS). Residues 266–270 (NMTQR) lie on the Cytoplasmic side of the membrane. A helical transmembrane segment spans residues 271–285 (VVIALLVLAVGPAYS). The Extracellular segment spans residues 286-730 (AHCIGITDRD…MVFGSAFQGL (445 aa)). Intrachain disulfides connect C288–C315, C345–C406, C359–C390, C377–C401, C467–C568, and C585–C615. Residues 383–396 (DRGWGNGCGLFGKG) are fusion peptide. Residues 731–751 (FGGLSWITKVIMGAVLIWVGI) traverse the membrane as a helical segment. Over 752–757 (NMRNMT) the chain is Extracellular. Residues 758 to 778 (MSMSMILVGVIMMFLSLGVGA) traverse the membrane as a helical segment. The Extracellular portion of the chain corresponds to 779–1163 (DQGCAINFGK…RQGPKQILVG (385 aa)). Disulfide bonds link C782–C793, C833–C921, C957–C1002, C1058–C1107, C1069–C1091, and C1090–C1094. Residues N908 and N986 are each glycosylated (N-linked (GlcNAc...) asparagine; by host).

Homodimer. Interacts (via N-terminus) with host EXOC1 (via C-terminus); this interaction results in EXOC1 degradation through the proteasome degradation pathway. As to quaternary structure, forms heterodimers with envelope protein E in the endoplasmic reticulum and Golgi. In terms of assembly, homodimer; in the endoplasmic reticulum and Golgi. Homodimer; Homohexamer when secreted. Interacts with envelope protein E. Post-translationally, specific enzymatic cleavages in vivo yield mature proteins. The nascent capsid protein C contains a C-terminal hydrophobic domain that act as a signal sequence for translocation of prM into the lumen of the ER. Mature capsid protein C is cleaved at a site upstream of this hydrophobic domain by NS3. prM is cleaved in post-Golgi vesicles by a host furin, releasing the mature small envelope protein M, and peptide pr. Non-structural protein 2A-alpha, a C-terminally truncated form of non-structural protein 2A, results from partial cleavage by NS3. Specific enzymatic cleavages in vivo yield mature proteins peptide 2K acts as a signal sequence and is removed from the N-terminus of NS4B by the host signal peptidase in the ER lumen. Signal cleavage at the 2K-4B site requires a prior NS3 protease-mediated cleavage at the 4A-2K site. In terms of processing, cleaved in post-Golgi vesicles by a host furin, releasing the mature small envelope protein M, and peptide pr. This cleavage is incomplete as up to 30% of viral particles still carry uncleaved prM. N-glycosylated. Post-translationally, N-glycosylated. The excreted form is glycosylated and this is required for efficient secretion of the protein from infected cells.

The protein resides in the virion. Its subcellular location is the host nucleus. It is found in the host cytoplasm. The protein localises to the host perinuclear region. It localises to the secreted. The protein resides in the virion membrane. Its subcellular location is the host endoplasmic reticulum membrane. Functionally, plays a role in virus budding by binding to the cell membrane and gathering the viral RNA into a nucleocapsid that forms the core of a mature virus particle. During virus entry, may induce genome penetration into the host cytoplasm after hemifusion induced by the surface proteins. Can migrate to the cell nucleus where it modulates host functions. In terms of biological role, inhibits RNA silencing by interfering with host Dicer. Prevents premature fusion activity of envelope proteins in trans-Golgi by binding to envelope protein E at pH6.0. After virion release in extracellular space, gets dissociated from E dimers. Its function is as follows. Acts as a chaperone for envelope protein E during intracellular virion assembly by masking and inactivating envelope protein E fusion peptide. prM is the only viral peptide matured by host furin in the trans-Golgi network probably to avoid catastrophic activation of the viral fusion activity in acidic Golgi compartment prior to virion release. prM-E cleavage is inefficient, and many virions are only partially matured. These uncleaved prM would play a role in immune evasion. Functionally, may play a role in virus budding. Exerts cytotoxic effects by activating a mitochondrial apoptotic pathway through M ectodomain. May display a viroporin activity. In terms of biological role, binds to host cell surface receptor and mediates fusion between viral and cellular membranes. Envelope protein is synthesized in the endoplasmic reticulum in the form of heterodimer with protein prM. They play a role in virion budding in the ER, and the newly formed immature particle is covered with 60 spikes composed of heterodimer between precursor prM and envelope protein E. The virion is transported to the Golgi apparatus where the low pH causes dissociation of PrM-E heterodimers and formation of E homodimers. prM-E cleavage is inefficient, and many virions are only partially matured. These uncleaved prM would play a role in immune evasion. Involved in immune evasion, pathogenesis and viral replication. Once cleaved off the polyprotein, is targeted to three destinations: the viral replication cycle, the plasma membrane and the extracellular compartment. Essential for viral replication. Required for formation of the replication complex and recruitment of other non-structural proteins to the ER-derived membrane structures. Excreted as a hexameric lipoparticle that plays a role against host immune response. Antagonizing the complement function. Binds to the host macrophages and dendritic cells. Inhibits signal transduction originating from Toll-like receptor 3 (TLR3). Its function is as follows. Component of the viral RNA replication complex that functions in virion assembly and antagonizes the host immune response. In Aedes aegypti (Yellowfever mosquito), this protein is Genome polyprotein.